The primary structure comprises 348 residues: MEMSFRWYGEDDPVTLENIGQIPTMKGIVTAIYDVPVGEVWSRERIQQLKEKVEAAGLKISVIESVPVHEDIKLGRPTRDLLIDNYIQTVKNLAAEGIDTICYNFMPVFDWTRTDLAYQYPDGSTALIFDETVSKKMDPVNGELSLPGWDASYSKEEMKAIMDAYAEIDEEKLWENLTYFIKRIIPEAEAVGVKMAIHPDDPPYSIFGLPRIITGLEAIERFVKLYDSKSNGITLCVGSYASDPQNDVLEISRRAFELDRVNFVHARNIKLGDGKSFKESAHPSEYGSIDMYEVIKLCHEFGFEGAIRPDHGRMIWGETGRPGYGLYDRALGATYLSGLYEAVIKGSK.

The protein belongs to the mannonate dehydratase family. It depends on Fe(2+) as a cofactor. Mn(2+) serves as cofactor.

The enzyme catalyses D-mannonate = 2-dehydro-3-deoxy-D-gluconate + H2O. It functions in the pathway carbohydrate metabolism; pentose and glucuronate interconversion. Catalyzes the dehydration of D-mannonate. The sequence is that of Mannonate dehydratase from Streptococcus agalactiae serotype III (strain NEM316).